A 798-amino-acid polypeptide reads, in one-letter code: MNLQPIFWIGLISSICCVFAQTDENRCLKANAKSCGECIQAGPNCGWCTNSTFLQEGMPTSARCDDLEALKKKGCPPDDIENPRGSKDIKKNKNVTNRSKGTAEKLKPEDITQIQPQQLVLRLRSGEPQTFTLKFKRAEDYPIDLYYLMDLSYSMKDDLENVKSLGTDLMNEMRRITSDFRIGFGSFVEKTVMPYISTTPVKLRNPCTSEQNCTSPFSYKNVLSLTNKGEVFNELVGKQRISGNLDSPEGGFDAIMQVAVCGSLIGRRNVTRLLVFSTDAGFHFAGDGKLGGIVLPNDGQCHLENNMYTMSHYYDYPSIAHLVQKLSENNIQTIFAVTEEFQPVYKELKNLIPKSAVGTLSANSSNVIQLIIDAYNSLSSEVILENSKLSEGVTISYKSYCKNGVNGTGENGRKCSNISIGDEVQFEISITSNKCPKKDSDSFKIRPLGFTEEVEVILQYICECECQSEGIPESPKCHEGNGTFECGACRCNEGRVGRHCECSTDEVNSEDMDAYCRKENSSEICSNNGECVCGQCVCRKRDNTNEIYSGKFCECDNFNCDRSNGLICGGNGVCKCRVCECNPNYTGSACDCSLDTSTCEASNGQICNGRGICECGVCKCTDPKFQGQTCEMCQTCLGVCAGHKECVQCRAFNKGEKKDTCTQECSYFNITKVESRDKLPQPVQPDPVSHCKEKDVDDCWFYFTYSVNGNNEVMVHVVENPECPTGPDIIPIVAGVVAGIVLIGLALLLIWKLLMIIHDRREFAKFEKEKMNAKWDTGENPIYKSAVTTVVNPKYEGK.

Positions 1–20 are cleaved as a signal peptide; that stretch reads MNLQPIFWIGLISSICCVFA. The region spanning 26–76 is the PSI domain; the sequence is RCLKANAKSCGECIQAGPNCGWCTNSTFLQEGMPTSARCDDLEALKKKGCP. 28 cysteine pairs are disulfide-bonded: C27–C45, C35–C464, C38–C64, C48–C75, C207–C213, C261–C301, C401–C415, C435–C462, C466–C486, C477–C489, C491–C500, C502–C533, C516–C531, C525–C536, C538–C553, C555–C576, C560–C574, C568–C579, C581–C590, C592–C615, C599–C613, C607–C618, C620–C630, C633–C636, C640–C691, C646–C665, C649–C661, and C699–C723. N50 carries N-linked (GlcNAc...) asparagine glycosylation. The tract at residues 75-107 is disordered; the sequence is CPPDDIENPRGSKDIKKNKNVTNRSKGTAEKLK. Residues 81–91 are compositionally biased toward basic and acidic residues; sequence ENPRGSKDIKK. N94 and N97 each carry an N-linked (GlcNAc...) asparagine glycan. The region spanning 140–378 is the VWFA domain; it reads DYPIDLYYLM…QLIIDAYNSL (239 aa). Residues S152 and S154 each contribute to the Mg(2+) site. Residues S154, D157, D158, and E189 each contribute to the Ca(2+) site. The interval 207-213 is CX3CL1-binding; sequence CTSEQNC. N212 carries an N-linked (GlcNAc...) asparagine glycan. Residues N244, D246, P248, and E249 each coordinate Ca(2+). E249 contacts Mg(2+). Residue N269 is glycosylated (N-linked (GlcNAc...) asparagine). Residues 295 to 314 form a CX3CL1-binding region; that stretch reads LPNDGQCHLENNMYTMSHYY. A362 is a Ca(2+) binding site. N-linked (GlcNAc...) asparagine glycosylation is found at N363, N406, and N417. Residues 383–465 are interaction with TMEM182; that stretch reads ILENSKLSEG…VILQYICECE (83 aa). I-EGF domains are found at residues 466–501, 502–554, 555–591, and 592–631; these read CQSE…RHCE, CSTD…KFCE, CDNF…SACD, and CSLD…QTCE. A glycan (N-linked (GlcNAc...) asparagine) is linked at N481. Residue N520 is glycosylated (N-linked (GlcNAc...) asparagine). A glycan (N-linked (GlcNAc...) asparagine) is linked at N584. The N-linked (GlcNAc...) asparagine glycan is linked to N669. A helical transmembrane segment spans residues 729-749; that stretch reads IIPIVAGVVAGIVLIGLALLL. Positions 762–767 are signal for sorting from recycling endosomes; interaction with ACAP1; it reads EFAKFE. A Phosphothreonine modification is found at T777. Residue Y783 is modified to Phosphotyrosine. Residue S785 is modified to Phosphoserine. Residues 785 to 792 form an interaction with ITGB1BP1 region; that stretch reads SAVTTVVN. T789 carries the post-translational modification Phosphothreonine. Residue K794 is modified to N6-acetyllysine; alternate. K794 is covalently cross-linked (Glycyl lysine isopeptide (Lys-Gly) (interchain with G-Cter in SUMO1); alternate).

The protein belongs to the integrin beta chain family. Interacts with seprase FAP (seprase); the interaction occurs at the cell surface of invadopodia membrane in a collagen-dependent manner. Heterodimer of an alpha and a beta subunit. Beta-1 associates with either alpha-1, alpha-2, alpha-3, alpha-4, alpha-5, alpha-6, alpha-7, alpha-8, alpha-9, alpha-10, alpha-11 or alpha-V. ITGA6:ITGB1 is found in a complex with CD9; interaction takes place in oocytes and is involved in sperm-egg fusion. Binds LGALS3BP and NMRK2, when associated with alpha-7, but not with alpha-5. Interacts with FLNA, FLNB, FLNC and RANBP9. Interacts with KRT1 in the presence of RACK1 and SRC. Interacts with JAML; integrin alpha-4/beta-1 may regulate leukocyte to endothelial cells adhesion by controlling JAML homodimerization. Interacts with RAB21. Interacts (via the cytoplasmic region) with RAB25 (via the hypervariable C-terminal region). Interacts with MYO10. Interacts with ITGB1BP1 (via C-terminal region); the interaction is a prerequisite for focal adhesion disassembly. Interacts with TLN1; the interaction is prevented by competitive binding of ITGB1BP1. Interacts with ACAP1; required for ITGB1 recycling. Interacts with ASAP3. Interacts with FERMT2; the interaction is inhibited in presence of ITGB1BP1. Interacts with DAB2. Interacts with FGR and HCK. Interacts with alpha-7A and alpha-7B in adult skeletal muscle. Interacts with alpha-7B in cardiomyocytes of adult heart. Interacts with EMP2; the interaction may be direct or indirect and ITGB1 has a heterodimer form. ITGA5:ITGB1 interacts with CCN3. ITGA4:ITGB1 is found in a ternary complex with CX3CR1 and CX3CL1. ITGA5:ITGB1 interacts with FBN1. ITGA5:ITGB1 acts as a receptor for fibronectin FN1 and mediates R-G-D-dependent cell adhesion to FN1. ITGA5:ITGB1 interacts with IL1B. Interacts with MDK. ITGA4:ITGB1 interacts with MDK; this interaction mediates MDK-induced osteoblast cells migration through PXN phosphorylation. ITGA6:ITGB1 interacts with MDK; this interaction mediates MDK-induced neurite-outgrowth. ITGA5:ITGB1 interacts with ACE2. Interacts with TMEM182 and LAMB1. Interacts with tensin TNS3; TNS3 also interacts with PEAK1, thus acting as an adapter molecule to bridge the association of PEAK1 with ITGB1. Interacts with tensin TNS4; the interaction displaces tensin TNS3 from the ITGB1 cytoplasmic tail and promotes ITGB1 stability. Integrin ITGA9:ITGB1 interacts with SPP1/OPN (via N-terminus). Integrin ITGA9:ITGB1 interacts with TNC/TNFN3 (via the 3rd Fibronectin type-III domain). Integrins ITGA4:ITGB1 and ITGA9:ITGB1 interact with SVEP1 (via Sushi domain 21); thereby inhibit Ca(2+) intracellular signaling and as a result repress vasocontraction. ITGA4:ITGB1 and ITGA5:ITGB1 interacts with SELP. Interacts with CD248. ITGA5:ITGB1 interacts with IGFBP1. ITGA4:ITGB1 interacts with BCAM. Interacts with ADGRG6.

It localises to the cell membrane. Its subcellular location is the cell projection. The protein localises to the invadopodium membrane. The protein resides in the ruffle membrane. It is found in the recycling endosome. It localises to the melanosome. Its subcellular location is the lamellipodium. The protein localises to the ruffle. The protein resides in the cell junction. It is found in the focal adhesion. Integrins alpha-1/beta-1, alpha-2/beta-1, alpha-10/beta-1 and alpha-11/beta-1 are receptors for collagen. Integrins alpha-1/beta-1 and alpha-2/beta-2 recognize the proline-hydroxylated sequence G-F-P-G-E-R in collagen. Integrins alpha-2/beta-1, alpha-3/beta-1, alpha-4/beta-1, alpha-5/beta-1, alpha-8/beta-1, alpha-10/beta-1, alpha-11/beta-1 and alpha-V/beta-1 are receptors for fibronectin. Alpha-4/beta-1 recognizes one or more domains within the alternatively spliced CS-1 and CS-5 regions of fibronectin. Integrin alpha-5/beta-1 is a receptor for fibrinogen. Integrin alpha-1/beta-1, alpha-2/beta-1, alpha-6/beta-1 and alpha-7/beta-1 are receptors for lamimin. Integrin alpha-6/beta-1 (ITGA6:ITGB1) is present in oocytes and is involved in sperm-egg fusion. Integrin alpha-4/beta-1 is a receptor for VCAM1 and recognizes the sequence Q-I-D-S in VCAM1. Integrin alpha-9/beta-1 is a receptor for VCAM1, cytotactin and osteopontin. It recognizes the sequence A-E-I-D-G-I-E-L in cytotactin. Integrin alpha-3/beta-1 is a receptor for epiligrin, thrombospondin and CSPG4. Integrin alpha-3/beta-1 provides a docking site for FAP (seprase) at invadopodia plasma membranes in a collagen-dependent manner and hence may participate in the adhesion, formation of invadopodia and matrix degradation processes, promoting cell invasion. Alpha-3/beta-1 may mediate with LGALS3 the stimulation by CSPG4 of endothelial cells migration. Integrin alpha-V/beta-1 is a receptor for vitronectin. Beta-1 integrins recognize the sequence R-G-D in a wide array of ligands. When associated with alpha-7/beta-1 integrin, regulates cell adhesion and laminin matrix deposition. Involved in promoting endothelial cell motility and angiogenesis. Involved in osteoblast compaction through the fibronectin fibrillogenesis cell-mediated matrix assembly process and the formation of mineralized bone nodules. May be involved in up-regulation of the activity of kinases such as PKC via binding to KRT1. Together with KRT1 and RACK1, serves as a platform for SRC activation or inactivation. Plays a mechanistic adhesive role during telophase, required for the successful completion of cytokinesis. ITGA4:ITGB1 binds to fractalkine (CX3CL1) and may act as its coreceptor in CX3CR1-dependent fractalkine signaling. ITGA4:ITGB1 and ITGA5:ITGB1 bind to PLA2G2A via a site (site 2) which is distinct from the classical ligand-binding site (site 1) and this induces integrin conformational changes and enhanced ligand binding to site 1. ITGA5:ITGB1 acts as a receptor for fibrillin-1 (FBN1) and mediates R-G-D-dependent cell adhesion to FBN1. ITGA5:ITGB1 is a receptor for IL1B and binding is essential for IL1B signaling. ITGA5:ITGB3 is a receptor for soluble CD40LG and is required for CD40/CD40LG signaling. Plays an important role in myoblast differentiation and fusion during skeletal myogenesis. ITGA9:ITGB1 may play a crucial role in SVEP1/polydom-mediated myoblast cell adhesion. Integrins ITGA9:ITGB1 and ITGA4:ITGB1 repress PRKCA-mediated L-type voltage-gated channel Ca(2+) influx and ROCK-mediated calcium sensitivity in vascular smooth muscle cells via their interaction with SVEP1, thereby inhibit vasocontraction. The polypeptide is Integrin beta-1 (ITGB1) (Pongo abelii (Sumatran orangutan)).